We begin with the raw amino-acid sequence, 111 residues long: Large ribosomal subunit protein uL22 (111 aa).

It belongs to the universal ribosomal protein uL22 family. Part of the 50S ribosomal subunit.

Functionally, this protein binds specifically to 23S rRNA; its binding is stimulated by other ribosomal proteins, e.g. L4, L17, and L20. It is important during the early stages of 50S assembly. It makes multiple contacts with different domains of the 23S rRNA in the assembled 50S subunit and ribosome. In terms of biological role, the globular domain of the protein is located near the polypeptide exit tunnel on the outside of the subunit, while an extended beta-hairpin is found that lines the wall of the exit tunnel in the center of the 70S ribosome. The sequence is that of Large ribosomal subunit protein uL22 from Xanthomonas oryzae pv. oryzae (strain PXO99A).